Consider the following 407-residue polypeptide: Flagellar calcium-binding protein TB-44A (407 aa).

The tract at residues 1–27 (MGCSASKDTTNSKDGAASKGGKDGKTT) is disordered. Residues 25–399 (KTTADRKVAW…LQVCGDPDGE (375 aa)) are 2 X 186 AA almost perfect repeats. Residues 48–83 (ESKSRRIELFKRFDTNGTGKLSFREVLDGCYSILKL) enclose the EF-hand 1 domain. Ca(2+) contacts are provided by D61, N63, T65, K67, and E72. Positions 110–121 (GVGEEDLVEFLE) are ancestral calcium site 2. EF-hand domains lie at 130-165 (YDIF…WKEW), 167-202 (VDIT…KKLQ), and 237-272 (ESKS…ILKL). Ca(2+) is bound by residues D143, D145, S147, E154, D180, N182, S184, E191, D250, N252, T254, K256, and E261. The ancestral calcium site 6 stretch occupies residues 299–310 (GVGEEDLVEFLE). EF-hand domains are found at residues 319–354 (YDIF…WKEW) and 356–391 (VDIT…KKLQ). Ca(2+) contacts are provided by D332, D334, S336, E343, D369, N371, S373, and E380.

Belongs to the calflagin family.

The protein localises to the cell projection. It localises to the cilium. It is found in the flagellum. May contribute to the rapid motility of the trypanosomes, playing a role either in flagellar structure or in calcium metabolism. Could alternate between a GDP-bound inactive form to a calcium/GTP-bound active form. This chain is Flagellar calcium-binding protein TB-44A, found in Trypanosoma brucei brucei.